A 524-amino-acid polypeptide reads, in one-letter code: Chromosomal replication initiator protein DnaA (524 aa).

A domain I, interacts with DnaA modulators region spans residues 1–73 (MELPESAWEQ…DELLSSADHH (73 aa)). The interval 73-187 (HPITSVEISV…DVEGGLQHKS (115 aa)) is domain II. 3 stretches are compositionally biased toward polar residues: residues 86-95 (RSTSFETNQG), 106-126 (APRQ…QPQQ), and 153-165 (NGYN…QPYN). Residues 86–173 (RSTSFETNQG…YNDNPMGQGK (88 aa)) form a disordered region. Residues 188–404 (NLNPTFIFDN…GALKRVIANA (217 aa)) form a domain III, AAA+ region region. ATP-binding residues include Gly-232, Gly-234, Lys-235, and Thr-236. The tract at residues 405 to 524 (HFTGRDISVE…VKNLLRTLTT (120 aa)) is domain IV, binds dsDNA.

The protein belongs to the DnaA family. As to quaternary structure, oligomerizes as a right-handed, spiral filament on DNA at oriC.

The protein localises to the cytoplasm. In terms of biological role, plays an essential role in the initiation and regulation of chromosomal replication. ATP-DnaA binds to the origin of replication (oriC) to initiate formation of the DNA replication initiation complex once per cell cycle. Binds the DnaA box (a 9 base pair repeat at the origin) and separates the double-stranded (ds)DNA. Forms a right-handed helical filament on oriC DNA; dsDNA binds to the exterior of the filament while single-stranded (ss)DNA is stabiized in the filament's interior. The ATP-DnaA-oriC complex binds and stabilizes one strand of the AT-rich DNA unwinding element (DUE), permitting loading of DNA polymerase. After initiation quickly degrades to an ADP-DnaA complex that is not apt for DNA replication. Binds acidic phospholipids. In Saccharophagus degradans (strain 2-40 / ATCC 43961 / DSM 17024), this protein is Chromosomal replication initiator protein DnaA.